Here is a 500-residue protein sequence, read N- to C-terminus: Na(+)/H(+) antiporter NhaB (500 aa).

The next 13 helical transmembrane spans lie at 11–31, 34–54, 58–78, 96–116, 121–141, 145–165, 205–225, 241–261, 311–331, 350–370, 394–414, 450–470, and 477–497; these read HGFL…FLVL, LLLA…EFIF, MALK…ALLL, VILL…LLLF, ILLG…LSAF, FLDA…FYAV, LLMH…VGEP, FLLK…LTCV, ILII…LMVI, FQDA…VAVI, MLYL…VATI, ATPN…APLI, and MVWM…WAVT.

The protein belongs to the NhaB Na(+)/H(+) (TC 2.A.34) antiporter family.

It is found in the cell inner membrane. The catalysed reaction is 2 Na(+)(in) + 3 H(+)(out) = 2 Na(+)(out) + 3 H(+)(in). Its function is as follows. Na(+)/H(+) antiporter that extrudes sodium in exchange for external protons. This Pseudomonas putida (strain ATCC 700007 / DSM 6899 / JCM 31910 / BCRC 17059 / LMG 24140 / F1) protein is Na(+)/H(+) antiporter NhaB.